We begin with the raw amino-acid sequence, 420 residues long: Putative phosphate permease HI_1604 (420 aa).

Transmembrane regions (helical) follow at residues 8 to 28 (GSWLVWITAVFGFFMAFGIGA), 49 to 69 (AIIIALIFESAGAYLAGGEVT), 88 to 108 (ILALGMLSTLFASGAWLFIAT), 112 to 132 (WPVSGTHTIIGAIIGFACITI), 145 to 165 (IVGSWFVTPVIAGILAYAIFA), 185 to 205 (GPYYMGITVFVLCIVTMKKGL), 216 to 236 (ETLIISLAISLIGMFFFHFYF), 250 to 270 (FGAVEKVFSILMLLTACAMAF), 300 to 320 (GGALTWWILPLGALGIAVGLI), 343 to 363 (FAAQFATAMTVVVASGTGLPI), 370 to 390 (VGAILGIGFARGIAALNLTVI), and 393 to 413 (IISSWIVTLPAGAFFAIIIFY).

It belongs to the inorganic phosphate transporter (PiT) (TC 2.A.20) family.

The protein resides in the cell inner membrane. Its function is as follows. Potential transporter for phosphate. The protein is Putative phosphate permease HI_1604 of Haemophilus influenzae (strain ATCC 51907 / DSM 11121 / KW20 / Rd).